The following is a 351-amino-acid chain: MTALTLAPCDLVVADLGGTTLRVGRITAGTSEVHDVKRVPTNGLGRYGALAPQELQDRVMEQLTREIAAHLTRPGQAPAQAVAVSFAGPMTADGVVLAGPTLWGGPAAPLPVADVLTQRLGLPVVAANDVTAAAWRYAAAEPEPFCLTTVSSGIGNKVFRHGEIVIDQLGYGGEIGHWLVDHAEDAAPCECGGRGHLGAIASGRGALFAVRAAAAADASAFARSALAGPSGGVPEAITNEAFAAAARAGDTFARESLRRSLRPLASAVSLLFTAIGVRRYLFVGGFALALGDTFLTLLGDELVRVGCFGLDEYATRAMLALGEDDDDHCLIGIGQLAAARLGAPRAVEVTA.

Belongs to the ROK (NagC/XylR) family.

The catalysed reaction is valienone + ATP = valienone 7-phosphate + ADP + H(+). It catalyses the reaction validone + ATP = validone 7-phosphate + ADP + H(+). In terms of biological role, involved in the biosynthesis of the antifungal agent validamycin A. Catalyzes the phosphorylation of valienone and validone to their 7-phosphate derivatives. This chain is C(7)-cyclitol 7-kinase, found in Streptomyces hygroscopicus subsp. jinggangensis (strain 5008).